A 515-amino-acid polypeptide reads, in one-letter code: Gap junction alpha-9 protein (515 aa).

Residues 1–19 (MGDWNLLGDTLEEVHIHST) are Cytoplasmic-facing. Residues 20–40 (MIGKIWLTILFIFRMLVLGVA) form a helical membrane-spanning segment. The Extracellular segment spans residues 41 to 77 (AEDVWNDEQSGFICNTEQPGCRNVCYDQAFPISLIRY). The helical transmembrane segment at 78 to 98 (WVLQVIFVSSPSLVYMGHALY) threads the bilayer. Topologically, residues 99-166 (RLRVLEEERQ…YVIHIFTRSV (68 aa)) are cytoplasmic. A helical transmembrane segment spans residues 167–187 (VEVGFMIGQYLLYGFHLEPLF). Residues 188 to 209 (KCHGHPCPNIIDCFVSRPTEKT) are Extracellular-facing. The chain crosses the membrane as a helical span at residues 210-230 (IFLLFMQSIATISLFLNILEI). Residues 231–515 (FHLGFKKIKR…GRRVPTDLQI (285 aa)) are Cytoplasmic-facing. Residues 370–380 (KRETEGKDSKR) show a composition bias toward basic and acidic residues. 2 disordered regions span residues 370–400 (KRET…GENN) and 428–472 (SSTE…NTAD). A compositionally biased stretch (polar residues) spans 456 to 472 (PPSQGDSQSLDIPNTAD).

Belongs to the connexin family. Alpha-type (group II) subfamily. A connexon is composed of a hexamer of connexins. As to expression, highly abundant in skeletal muscle. Also detected in testis.

It is found in the cell membrane. Its subcellular location is the cell junction. The protein resides in the gap junction. In terms of biological role, one gap junction consists of a cluster of closely packed pairs of transmembrane channels, the connexons, through which materials of low MW diffuse from one cell to a neighboring cell. This is Gap junction alpha-9 protein (GJA9) from Homo sapiens (Human).